We begin with the raw amino-acid sequence, 263 residues long: Diphthine synthase (263 aa).

S-adenosyl-L-methionine-binding positions include L9, D84, M87, 112-113, L164, A207, and H232; that span reads SI.

This sequence belongs to the diphthine synthase family. In terms of assembly, homodimer.

The catalysed reaction is 2-[(3S)-amino-3-carboxypropyl]-L-histidyl-[translation elongation factor 2] + 3 S-adenosyl-L-methionine = diphthine-[translation elongation factor 2] + 3 S-adenosyl-L-homocysteine + 3 H(+). Its pathway is protein modification; peptidyl-diphthamide biosynthesis. S-adenosyl-L-methionine-dependent methyltransferase that catalyzes the trimethylation of the amino group of the modified target histidine residue in translation elongation factor 2 (EF-2), to form an intermediate called diphthine. The three successive methylation reactions represent the second step of diphthamide biosynthesis. This is Diphthine synthase from Methanosphaera stadtmanae (strain ATCC 43021 / DSM 3091 / JCM 11832 / MCB-3).